A 245-amino-acid polypeptide reads, in one-letter code: Cysteine-rich secretory protein 3 (245 aa).

The first 20 residues, 1-20, serve as a signal peptide directing secretion; that stretch reads MTLFPVLLFLVAGLLPSFPA. Residues 43 to 171 form the SCP domain; the sequence is VNKHNELRRA…VLKYYYVCQY (129 aa). Cystine bridges form between Cys-191–Cys-198, Cys-194–Cys-203, Cys-207–Cys-240, Cys-216–Cys-234, and Cys-225–Cys-238. The region spanning 207-240 is the ShKT domain; the sequence is CKYEDLYSNCKSLKLTLTCKHQLVRDSCKASCNC. Asn-239 is a glycosylation site (N-linked (GlcNAc...) asparagine).

Belongs to the CRISP family. Interacts with A1BG. Salivary gland, pancreas and prostate &gt; epididymis, ovary, thymus and colon.

The protein localises to the secreted. In Homo sapiens (Human), this protein is Cysteine-rich secretory protein 3 (CRISP3).